Consider the following 1104-residue polypeptide: Lon protease homolog, mitochondrial (1104 aa).

Residues Met1–Phe54 constitute a mitochondrion transit peptide. Disordered stretches follow at residues Ser41–Val192 and Ser296–Arg317. Basic and acidic residues-rich tracts occupy residues Lys64–Gly104 and Lys125–Ala144. Residues Ser158–Ser169 are compositionally biased toward low complexity. 2 stretches are compositionally biased toward basic and acidic residues: residues Gly172–Leu187 and Asn308–Arg317. Residues Val199–Leu451 form the Lon N-terminal domain. Gly604–Thr611 lines the ATP pocket. The span at Ala825 to Gly839 shows a compositional bias: basic and acidic residues. The disordered stretch occupies residues Ala825 to Val857. Positions Thr891–Asp1077 constitute a Lon proteolytic domain. Residues Ser983 and Lys1026 contribute to the active site.

The protein belongs to the peptidase S16 family. In terms of assembly, homohexamer or homoheptamer. Organized in a ring with a central cavity.

The protein resides in the mitochondrion matrix. It carries out the reaction Hydrolysis of proteins in presence of ATP.. Functionally, ATP-dependent serine protease that mediates the selective degradation of misfolded, unassembled or oxidatively damaged polypeptides as well as certain short-lived regulatory proteins in the mitochondrial matrix. May also have a chaperone function in the assembly of inner membrane protein complexes. Participates in the regulation of mitochondrial gene expression and in the maintenance of the integrity of the mitochondrial genome. Binds to mitochondrial DNA in a site-specific manner. This is Lon protease homolog, mitochondrial (pim1) from Emericella nidulans (strain FGSC A4 / ATCC 38163 / CBS 112.46 / NRRL 194 / M139) (Aspergillus nidulans).